Here is a 1133-residue protein sequence, read N- to C-terminus: MTTVDASPGISRFEGISSRSVTVATICSGPCSGSRSHSRYHWVPAAAGWTVGVIATLSLIASVSPLIRWLIRVPREFINNYLFNFPDTSIAWSFVLALLAAALTTRKRIAWLLLLGNMVLAAVLNAVDMAANGNTPAETFGENLGFAVHVVAILLLVLSYREFWAKVRRGALFKAAAVLVAGDVIGILLSLGLVELFPGSLARQDRLPYVANRVVGFALADPDLFSGKPHVLLNAIFGLFGALALIMATIVLFQSQRADNALTGEDESAIRGLLELYGKNDSLGYFATRRDKSVIFAHNGRAAITYRVEIGVCLASGDPVGDPGAWPQAVDAWLELCQTYGWAPGVMGASSQGAQVFRRAGFNAIELGDEAILRTAVYKLSGPDMRGVRQAVTRARRAGLTVRIRRHSDISANEMADTIARADAWRDTEFERGFSMALGRLGDPADSDCLLVEAVDRDDHVVAILSLVPWGTTGVSLDVMRRSPQSPNGTIELMVSELALKGETLGIARISLNFTMFRAAFEQGAQLGAGPIARLWRGLLLFFSRWWQLETLYRSNIKYLPDWVPRYACYEDARLIPRVGVASVIAEGFLVLPFSRRGRVHTGHHPAVPARLAESGLLHHDGSTPDVSGLQTADVDLEVANSRIPEQVRVRLAKLKTLQLNGIDAYPVGHPPSHTVAQALDADDEGTVSISGRILRIRDYGGVLFAHVRDWSGEIQVLLDNLVLECCCIADFTAAIDLGDIVEMTGNMGFSKNGTRSLIVRNWRLIGKCLRPLPNKWKGLTDPEARVRTRYVDLAVNTESRNLIMARSCVLRSVREMLFAKGFVEVETPILQQIHGGATARPFATRINTYDMDLFLRIAPELYLKRLCIGGVERVFELGRAFRNEGVDFSHNPEFTLLEAYQAHADYLMWIDGCRELIQNAAEAANGTQTLMRPRIEGASGTANHLEPIDISGVWPVKTVYEAVSEALGECVDTSTELATLRKLSDAAHIPYWPHWDTGAVVLKLYEHLVENRTDQPTFYIDFPTSVSPLTRPHRSKPGVAERWDLVAWGIELGTAYSELTDPVEQRRRLHEQSLLAVGGNPEAMELDEDFLQAMEYAMPPTGGLGMGIDRLVMLITGRSIRETLPFPLAKPH.

The interval methionine 1–aspartate 626 is phosphatidylglycerol lysyltransferase. The next 7 helical transmembrane spans lie at valine 43–valine 63, leucine 82–alanine 102, isoleucine 109–methionine 129, phenylalanine 140–tyrosine 160, alanine 177–phenylalanine 197, leucine 233–phenylalanine 253, and leucine 575–serine 595. Positions valine 627–histidine 1133 are lysine--tRNA ligase. The Mg(2+) site is built by aspartate 1045 and glutamate 1052.

In the N-terminal section; belongs to the LPG synthetase family. The protein in the C-terminal section; belongs to the class-II aminoacyl-tRNA synthetase family. Requires Mg(2+) as cofactor.

The protein resides in the cell membrane. The catalysed reaction is tRNA(Lys) + L-lysine + ATP = L-lysyl-tRNA(Lys) + AMP + diphosphate. It carries out the reaction L-lysyl-tRNA(Lys) + a 1,2-diacyl-sn-glycero-3-phospho-(1'-sn-glycerol) = a 1,2-diacyl-sn-glycero-3-phospho-1'-(3'-O-L-lysyl)-sn-glycerol + tRNA(Lys). In terms of biological role, catalyzes the production of L-lysyl-tRNA(Lys)transfer and the transfer of a lysyl group from L-lysyl-tRNA(Lys) to membrane-bound phosphatidylglycerol (PG), which produces lysylphosphatidylglycerol (LPG), one of the components of the bacterial membrane with a positive net charge. LPG synthesis contributes to the resistance to cationic antimicrobial peptides (CAMPs) and likely protects M.tuberculosis against the CAMPs produced by competiting microorganisms (bacteriocins). In fact, the modification of anionic phosphatidylglycerol with positively charged L-lysine results in repulsion of the peptides. This is Lysylphosphatidylglycerol biosynthesis bifunctional protein LysX (lysX) from Mycobacterium leprae (strain Br4923).